The chain runs to 338 residues: Tetraacyldisaccharide 4'-kinase (338 aa).

51–58 (HVGGAGKT) is an ATP binding site.

It belongs to the LpxK family.

The catalysed reaction is a lipid A disaccharide + ATP = a lipid IVA + ADP + H(+). It participates in glycolipid biosynthesis; lipid IV(A) biosynthesis; lipid IV(A) from (3R)-3-hydroxytetradecanoyl-[acyl-carrier-protein] and UDP-N-acetyl-alpha-D-glucosamine: step 6/6. Functionally, transfers the gamma-phosphate of ATP to the 4'-position of a tetraacyldisaccharide 1-phosphate intermediate (termed DS-1-P) to form tetraacyldisaccharide 1,4'-bis-phosphate (lipid IVA). This chain is Tetraacyldisaccharide 4'-kinase, found in Bradyrhizobium diazoefficiens (strain JCM 10833 / BCRC 13528 / IAM 13628 / NBRC 14792 / USDA 110).